The chain runs to 117 residues: Protein GL2-INTERACTING REPRESSOR 2 (117 aa).

The interval 1-56 is disordered; that stretch reads MSRRNKNGPKLELRLNLSPPPSQASQMSLVRSPNRSNTTSPSSCVSSETNQEENET. The EAR signature appears at 10–15; that stretch reads KLELRL. Residues 31–49 are compositionally biased toward low complexity; the sequence is RSPNRSNTTSPSSCVSSET.

As to quaternary structure, interacts with GL2. Interacts with TPL.

Its subcellular location is the nucleus. Functionally, acts as a negative regulator of root hair development redundantly with GIR1. GIR1 and GIR2 may function as adapter proteins that associate with GL2 and participate in the control of root hair formation. GIR1 and GIR2 may function as adapter proteins that associate with TPL and participate in the repression of root gene expression. This is Protein GL2-INTERACTING REPRESSOR 2 from Arabidopsis thaliana (Mouse-ear cress).